The chain runs to 60 residues: Putative transmembrane protein 74 (60 aa).

2 consecutive transmembrane segments (helical) span residues phenylalanine 4–phenylalanine 24 and tryptophan 35–glycine 55.

It localises to the host membrane. The polypeptide is Putative transmembrane protein 74 (SIFV0074) (Sulfolobus islandicus filamentous virus (isolate Iceland/Hveragerdi) (SIFV)).